The sequence spans 367 residues: Auxin efflux carrier component 8 (367 aa).

Residues 1–6 (MISWLD) lie on the Extracellular side of the membrane. The helical transmembrane segment at 7–27 (IYHVVSATVPLYVSMTLGFLS) threads the bilayer. At 28-38 (ARHLKLFSPEQ) the chain is on the cytoplasmic side. The chain crosses the membrane as a helical span at residues 39–59 (CAGINKFVAKFSIPLLSFQII). Ile-51 lines the (indol-3-yl)acetate pocket. Residues 60–69 (SENNPFKMSP) lie on the Extracellular side of the membrane. Residues 70–90 (KLILSDILQKFLVVVVLAMVL) traverse the membrane as a helical segment. Residues 91-105 (RFWHPTGGRGGKLGW) lie on the Cytoplasmic side of the membrane. The helical transmembrane segment at 106–126 (VITGLSISVLPNTLILGMPIL) threads the bilayer. (indol-3-yl)acetate is bound by residues Asn-117 and Leu-119. Residues 127-136 (SAIYGDEAAS) are Extracellular-facing. A helical membrane pass occupies residues 137-157 (ILEQIVVLQSLIWYTILLFLF). Residue Tyr-150 participates in (indol-3-yl)acetate binding. Over 158–227 (ELNAARALPS…LIINPNTYAT (70 aa)) the chain is Cytoplasmic. Residues 168–194 (SGASLEHTGNDQEEANIEDEPKEEEDE) are disordered. Over residues 178–194 (DQEEANIEDEPKEEEDE) the composition is skewed to acidic residues. The chain crosses the membrane as a helical span at residues 228-248 (LIGIIWATLHFRLGWNLPEMI). At 249–251 (DKS) the chain is on the extracellular side. The chain crosses the membrane as a helical span at residues 252–272 (IHLLSDGGLGMAMFSLGLFMA). The Cytoplasmic segment spans residues 273-288 (SQSSIIACGTKMAIIT). The helical transmembrane segment at 289–309 (MLLKFVLGPALMIASAYCIRL) threads the bilayer. Over 310 to 312 (KST) the chain is Extracellular. The chain crosses the membrane as a helical span at residues 313 to 333 (LFKVAILQAALPQGVVPFVFA). Residues Val-327 and Val-328 each coordinate (indol-3-yl)acetate. Residues 334–344 (KEYNLHPEIIS) lie on the Cytoplasmic side of the membrane. Residues 345-365 (TGVIFGMLIALPTTLAYYFLL) traverse the membrane as a helical segment. Over 366-367 (DL) the chain is Extracellular.

It belongs to the auxin efflux carrier (TC 2.A.69.1) family. In terms of assembly, homodimer. In terms of tissue distribution, expressed in veins of mature leaves. Strongly expressed in pollen.

The protein resides in the endoplasmic reticulum membrane. It is found in the cell membrane. With respect to regulation, auxin efflux carrier activity is competitively inhibited by naptalamate (N-1-naphthylphthalamic acid, NPA). In terms of biological role, acts as a component of the auxin efflux carrier. Component of the intracellular auxin-transport pathway in the male gametophyte. Involved in the regulation of auxin homeostasis in pollen. Involved in the efflux of auxin from the endoplasmic reticulum into the cytoplasm. Binds auxins including indole-3-acetic acid (IAA), naphthaleneacetic acid (NAA) and the herbicide 2,4-dichlorophenoxyacetic acid (2,4-D), but barely indole-3-butyric acid (IBA) and 2-phenylacetic acid (PAA). PIN5 and PIN8 may have an antagonistic/compensatory activity. Involved in the control of vein patterning. Redundantly with PIN6, inhibits the vein-formation-promoting functions of PIN5. PIN5, PIN6, and PIN8 control vein network geometry, but they are expressed in mutually exclusive domains of leaf vascular cells. This is Auxin efflux carrier component 8 from Arabidopsis thaliana (Mouse-ear cress).